A 127-amino-acid chain; its full sequence is Ribonuclease VapC9 (127 aa).

The 114-residue stretch at 2–115 (IVVDASAALA…VTADLRLSDT (114 aa)) folds into the PINc domain. Residues aspartate 5 and aspartate 91 each coordinate Mg(2+).

It belongs to the PINc/VapC protein family. Mg(2+) serves as cofactor.

Toxic component of a type II toxin-antitoxin (TA) system. An RNase. The cognate antitoxin is VapB9. The sequence is that of Ribonuclease VapC9 from Mycobacterium tuberculosis (strain CDC 1551 / Oshkosh).